Consider the following 383-residue polypeptide: MRFLDAGETHGKALIAIIEGFPAHVKIDIENINHLLQLRQRGYGRGKRMEIEKDRVKILSGVRNSFTTGAPITLMIENRDYENWRSFMDATQCDVDTKKVTVPRPGHADLAGCLKYEFDDARNVLERASARETAIRVAVGAVCEELLKMFGIKLYNHVVEIGRVRLTKSYSFDDTELFEQALSSSDLFCIDKEAEMKMKEEIDIAKQIGDSVGGIAEVICKNVPYGIGSHVHWDRKLDAQIAHSVMSIQSVKGVEIGMGFEAARRFGSEVHDEIYYDDKKGFYRKTNNAGGIEGGISNGMDIVVRAAFKPIPTLYKPLKSVDIRTFQPAEAAVERSDICAVPAGSIVMRAAIAYVLANALIERLGGDSAKTMLETFKRIYNKG.

2 residues coordinate NADP(+): R39 and R45. FMN contacts are provided by residues 127-129 (RAS), 249-250 (QS), G294, 309-313 (KPIPT), and R335.

The protein belongs to the chorismate synthase family. In terms of assembly, homotetramer. It depends on FMNH2 as a cofactor.

The enzyme catalyses 5-O-(1-carboxyvinyl)-3-phosphoshikimate = chorismate + phosphate. The protein operates within metabolic intermediate biosynthesis; chorismate biosynthesis; chorismate from D-erythrose 4-phosphate and phosphoenolpyruvate: step 7/7. In terms of biological role, catalyzes the anti-1,4-elimination of the C-3 phosphate and the C-6 proR hydrogen from 5-enolpyruvylshikimate-3-phosphate (EPSP) to yield chorismate, which is the branch point compound that serves as the starting substrate for the three terminal pathways of aromatic amino acid biosynthesis. This reaction introduces a second double bond into the aromatic ring system. In Caldicellulosiruptor bescii (strain ATCC BAA-1888 / DSM 6725 / KCTC 15123 / Z-1320) (Anaerocellum thermophilum), this protein is Chorismate synthase.